A 145-amino-acid polypeptide reads, in one-letter code: MRQTFMANESNIERKWYVIDAEGQTLGRLSSEVAAILRGKNKVTYTPHVDTGDYVIIINASKIEFTGNKEQDKMYHRHSNHPGGLKSISAGELKRTNPERLLETSIKGMLPSTRLGEKQGKKLFVYGGAEHPHAAQQPENYELRG.

The interval 72-91 (DKMYHRHSNHPGGLKSISAG) is disordered.

The protein belongs to the universal ribosomal protein uL13 family. In terms of assembly, part of the 50S ribosomal subunit.

This protein is one of the early assembly proteins of the 50S ribosomal subunit, although it is not seen to bind rRNA by itself. It is important during the early stages of 50S assembly. This is Large ribosomal subunit protein uL13 from Staphylococcus epidermidis (strain ATCC 12228 / FDA PCI 1200).